A 373-amino-acid polypeptide reads, in one-letter code: L-threonine 3-dehydrogenase, mitochondrial (373 aa).

NAD(+) is bound by residues 62 to 67 (GGLGQL), 88 to 90 (DIR), 106 to 107 (NI), Tyr-195, Lys-199, and Ile-225. Residue Tyr-195 is the Proton donor/acceptor of the active site.

This sequence belongs to the NAD(P)-dependent epimerase/dehydratase family. Homodimer.

It localises to the mitochondrion. It carries out the reaction L-threonine + NAD(+) = (2S)-2-amino-3-oxobutanoate + NADH + H(+). The protein operates within amino-acid degradation; L-threonine degradation via oxydo-reductase pathway; glycine from L-threonine: step 1/2. In terms of biological role, catalyzes the NAD(+)-dependent oxidation of L-threonine to 2-amino-3-ketobutyrate, mediating L-threonine catabolism. This Mus musculus (Mouse) protein is L-threonine 3-dehydrogenase, mitochondrial.